A 63-amino-acid chain; its full sequence is Arabinogalactan peptide 3 (63 aa).

The first 26 residues, 1–26 (MASRILYAAAVVAAVAVSSLAGVAYA), serve as a signal peptide directing secretion. Residue serine 36 is the site of GPI-anchor amidated serine attachment. Positions 37–63 (GAAAVSSSLVAAVLCPAVALLLGNLRQ) are cleaved as a propeptide — removed in mature form.

The protein belongs to the AG-peptide AGP family. Post-translationally, O-glycosylated on hydroxyprolines; noncontiguous hydroxylproline residues are glycosylated with arabinogalactan. Expressed in roots, stems, leaves, flowers and seeds.

Its subcellular location is the vacuole. The protein resides in the aleurone grain membrane. Functionally, proteoglycan that seems to be implicated in diverse developmental roles such as differentiation, cell-cell recognition, embryogenesis and programmed cell death. In Oryza sativa subsp. japonica (Rice), this protein is Arabinogalactan peptide 3 (AGPEP3).